Reading from the N-terminus, the 949-residue chain is Nonsense-mediated mRNA decay factor SMG8 (949 aa).

Disordered stretches follow at residues 564–607 (SGAR…LSPT), 624–652 (NESQASSEQLSNSEQNTSSSGTSSADTEN), and 748–768 (PKQQHHTHHQQQHPGKKQQRW). The segment covering 571-581 (EGDDEPEDEVV) has biased composition (acidic residues). Residues 594-607 (NTASNGCSQPLSPT) are compositionally biased toward polar residues. Over residues 624-648 (NESQASSEQLSNSEQNTSSSGTSSA) the composition is skewed to low complexity. Residues 749–768 (KQQHHTHHQQQHPGKKQQRW) show a composition bias toward basic residues.

This sequence belongs to the SMG8 family.

In terms of biological role, involved in nonsense-mediated decay (NMD) of mRNAs containing premature stop codons. Probable component of kinase complex containing nonC and recruited to stalled ribosomes. The polypeptide is Nonsense-mediated mRNA decay factor SMG8 (Drosophila erecta (Fruit fly)).